The following is a 161-amino-acid chain: Cyclic pyranopterin monophosphate synthase (161 aa).

Substrate-binding positions include 75-77 (LCH) and 113-114 (ME). The active site involves aspartate 128.

The protein belongs to the MoaC family. As to quaternary structure, homohexamer; trimer of dimers.

It carries out the reaction (8S)-3',8-cyclo-7,8-dihydroguanosine 5'-triphosphate = cyclic pyranopterin phosphate + diphosphate. It functions in the pathway cofactor biosynthesis; molybdopterin biosynthesis. In terms of biological role, catalyzes the conversion of (8S)-3',8-cyclo-7,8-dihydroguanosine 5'-triphosphate to cyclic pyranopterin monophosphate (cPMP). The chain is Cyclic pyranopterin monophosphate synthase from Salmonella typhi.